We begin with the raw amino-acid sequence, 552 residues long: Probable malate:quinone oxidoreductase (552 aa).

Positions 530-552 are disordered; the sequence is DAKPATPEAKPAQASSPQHDMAL. The span at 542–552 shows a compositional bias: polar residues; the sequence is QASSPQHDMAL.

The protein belongs to the MQO family. Requires FAD as cofactor.

The catalysed reaction is (S)-malate + a quinone = a quinol + oxaloacetate. Its pathway is carbohydrate metabolism; tricarboxylic acid cycle; oxaloacetate from (S)-malate (quinone route): step 1/1. This Cronobacter sakazakii (strain ATCC BAA-894) (Enterobacter sakazakii) protein is Probable malate:quinone oxidoreductase.